The primary structure comprises 910 residues: DNA mismatch repair protein MutS (910 aa).

Over residues 1–11 (MEAKVEEKEPE) the composition is skewed to basic and acidic residues. Residues 1-21 (MEAKVEEKEPEPVENAGPDAP) are disordered. Position 658–665 (658–665 (GPNMGGKS)) interacts with ATP.

Belongs to the DNA mismatch repair MutS family.

Its function is as follows. This protein is involved in the repair of mismatches in DNA. It is possible that it carries out the mismatch recognition step. This protein has a weak ATPase activity. The protein is DNA mismatch repair protein MutS of Brucella abortus (strain 2308).